A 311-amino-acid chain; its full sequence is Probable hydrogen peroxide-inducible genes activator (311 aa).

The region spanning 8–65 (PTIAGLRAFVAVVEKGHFSAAASFLGVRQSTLSQALAALESGLGVQLIERSTRRVFVT) is the HTH lysR-type domain. The segment at residues 25-44 (FSAAASFLGVRQSTLSQALA) is a DNA-binding region (H-T-H motif).

It belongs to the LysR transcriptional regulatory family.

In terms of biological role, required for the induction the katG gene for catalase. Involved in the response to hydrogen peroxide. The chain is Probable hydrogen peroxide-inducible genes activator (oxyR) from Mycobacterium leprae (strain TN).